The primary structure comprises 85 residues: MAHKKGGGTTRNGRDSESKRLGVKVYGGQVINAGGIIIRQRGTKVHPGENVGMGKDHTLFALTDGKVAFVIKGALQRQYVTVVPA.

The disordered stretch occupies residues 1-20; that stretch reads MAHKKGGGTTRNGRDSESKR.

Belongs to the bacterial ribosomal protein bL27 family.

This chain is Large ribosomal subunit protein bL27, found in Herminiimonas arsenicoxydans.